Here is a 122-residue protein sequence, read N- to C-terminus: Large ribosomal subunit protein bL12 (122 aa).

Belongs to the bacterial ribosomal protein bL12 family. In terms of assembly, homodimer. Part of the ribosomal stalk of the 50S ribosomal subunit. Forms a multimeric L10(L12)X complex, where L10 forms an elongated spine to which 2 to 4 L12 dimers bind in a sequential fashion. Binds GTP-bound translation factors.

Functionally, forms part of the ribosomal stalk which helps the ribosome interact with GTP-bound translation factors. Is thus essential for accurate translation. In Buchnera aphidicola subsp. Cinara cedri (strain Cc), this protein is Large ribosomal subunit protein bL12.